A 361-amino-acid chain; its full sequence is Plasmid recombination enzyme (361 aa).

DNA is bound by residues Tyr44 and Tyr114. Residues 331–361 (RAGLKEPSKKAPESSQELDRHKSDELGGPHL) are disordered.

Belongs to the plasmid mobilization pre family.

Functionally, the interaction of the RSA site and the pre protein may not only serve a function in plasmid maintenance, but also contribute to the distribution of small antibiotic resistance plasmids among Gram-positive bacteria. This is Plasmid recombination enzyme (preA) from Lactiplantibacillus plantarum (Lactobacillus plantarum).